Reading from the N-terminus, the 169-residue chain is MLYTLLLVPSLFLLVMPVPSQGWSRPLWYQVGLDLQPWGCQPNSPDIWGCQPNSLDSCKNSLGCPGYWLGLGGNRIYPVAGVTITTTMLLVVSRVIVHRWRAKVAKGQLPAVTSSSGKHWKEQPTVSDRTLVLRVLHMLDAILLHIEGHLQGLASQQQIQIKGSPPQSG.

Residues 1 to 22 (MLYTLLLVPSLFLLVMPVPSQG) form the signal peptide. The Extracellular portion of the chain corresponds to 23–75 (WSRPLWYQVGLDLQPWGCQPNSPDIWGCQPNSLDSCKNSLGCPGYWLGLGGNR). A helical membrane pass occupies residues 76–96 (IYPVAGVTITTTMLLVVSRVI). At 97 to 169 (VHRWRAKVAK…QIKGSPPQSG (73 aa)) the chain is on the cytoplasmic side.

The protein localises to the membrane. The polypeptide is Transmembrane protein 89 (Tmem89) (Mus musculus (Mouse)).